Reading from the N-terminus, the 75-residue chain is MSSGGLLLLLGLLTLWAELTPISGQDRPKKPGLRPPRPQKPPCVRECKNDWRCPGEQKCCRYGCIYECRDPIFVK.

Residues 1-24 (MSSGGLLLLLGLLTLWAELTPISG) form the signal peptide. Positions 23–42 (SGQDRPKKPGLRPPRPQKPP) are disordered. The WAP; atypical domain occupies 27–72 (RPKKPGLRPPRPQKPPCVRECKNDWRCPGEQKCCRYGCIYECRDPI). Intrachain disulfides connect Cys-43–Cys-64, Cys-47–Cys-59, and Cys-53–Cys-68.

This sequence belongs to the venom waprin family. As to expression, expressed by the venom gland.

The protein localises to the secreted. Its function is as follows. Damages membranes of susceptible bacteria. Has no hemolytic activity. Not toxic to mice. Does not inhibit the proteinases elastase and cathepsin G. This is Veswaprin-b from Demansia vestigiata (Lesser black whip snake).